The primary structure comprises 262 residues: Abhydrolase domain-containing protein ACTT2 (262 aa).

Positions 260 to 262 match the Peroxisomal targeting signal type 1 motif; it reads SKL.

This sequence belongs to the AB hydrolase superfamily. AKT2 hydrolase family.

The protein resides in the peroxisome. Its pathway is mycotoxin biosynthesis. Functionally, abhydrolase domain-containing protein; part of the gene clusters that mediate the biosynthesis of the host-selective toxins (HSTs) ACT-toxins responsible for brown spot of tangerine disease by the tangerine pathotype which affects tangerines and mandarins. ACT-toxins consist of three moieties, 9,10-epoxy-8-hydroxy-9-methyl-decatrienoic acid (EDA), valine and a polyketide. ACT-toxin I is toxic to both citrus and pear; toxin II the 5''-deoxy derivative of ACT-toxin I, is highly toxic to pear and slightly toxic to citrus. On cellular level, ACT-toxins affect plasma membrane of susceptible cells and cause a sudden increase in loss of K(+) after a few minutes of toxin treatment. The acyl-CoA ligase ACTT1, the hydrolase ACTT2, the enoyl-CoA hydratases ACTT3 and ACTT6, and the acyl-CoA synthetase ACTT5 are all involved in the biosynthesis of the AK-, AF- and ACT-toxin common 9,10-epoxy-8-hydroxy-9-methyl-decatrienoic acid (EDA) structural moiety. The exact role of each enzyme, and of additional enzymes identified within the AF-toxin clusters have still to be determined. On the other hand, ACTTS1 to ACTTS4 are specific to the tangerine pathotype. The function of ACTTS3 is to elongate the polyketide chain portion of ACT-toxin that is unique to this toxin. The enoyl-reductase ACTTS2 might complement the missing enoyl-reductase (ER) domain in ACTTS3 in the synthesis of the polyketide portion of ACT-toxin. The roles of the nonribosomal peptide synthetases-related proteins ACTTS1 and ACTTS4 have also still not been elucidated. This chain is Abhydrolase domain-containing protein ACTT2, found in Alternaria alternata (Alternaria rot fungus).